We begin with the raw amino-acid sequence, 486 residues long: Aspartyl/glutamyl-tRNA(Asn/Gln) amidotransferase subunit B (486 aa).

Belongs to the GatB/GatE family. GatB subfamily. Heterotrimer of A, B and C subunits.

The enzyme catalyses L-glutamyl-tRNA(Gln) + L-glutamine + ATP + H2O = L-glutaminyl-tRNA(Gln) + L-glutamate + ADP + phosphate + H(+). The catalysed reaction is L-aspartyl-tRNA(Asn) + L-glutamine + ATP + H2O = L-asparaginyl-tRNA(Asn) + L-glutamate + ADP + phosphate + 2 H(+). Its function is as follows. Allows the formation of correctly charged Asn-tRNA(Asn) or Gln-tRNA(Gln) through the transamidation of misacylated Asp-tRNA(Asn) or Glu-tRNA(Gln) in organisms which lack either or both of asparaginyl-tRNA or glutaminyl-tRNA synthetases. The reaction takes place in the presence of glutamine and ATP through an activated phospho-Asp-tRNA(Asn) or phospho-Glu-tRNA(Gln). This Azoarcus sp. (strain BH72) protein is Aspartyl/glutamyl-tRNA(Asn/Gln) amidotransferase subunit B.